A 537-amino-acid chain; its full sequence is Quadr-hydrophobin (537 aa).

The N-terminal stretch at 1–17 is a signal peptide; that stretch reads MKFITVAAALFASTSLA. Hydrophobin regions lie at residues 63 to 199, 200 to 299, 300 to 421, and 422 to 537; these read GGNP…QNPI, GGNP…ENPT, GGNP…QDPL, and GGNP…RAII. N-linked (GlcNAc...) asparagine glycosylation is found at Asn70 and Asn113. 16 disulfides stabilise this stretch: Cys134–Cys183, Cys144–Cys174, Cys145–Cys157, Cys184–Cys195, Cys234–Cys283, Cys244–Cys274, Cys245–Cys257, Cys284–Cys295, Cys356–Cys405, Cys366–Cys396, Cys367–Cys379, Cys406–Cys417, Cys471–Cys520, Cys481–Cys511, Cys482–Cys494, and Cys521–Cys532.

This sequence belongs to the cerato-ulmin hydrophobin family. Homotetramer. Further self-assembles to form highly ordered films at water-air interfaces through intermolecular interactions.

It is found in the secreted. Its subcellular location is the cell wall. In terms of biological role, aerial growth, conidiation, and dispersal of filamentous fungi in the environment rely upon a capability of their secreting small amphipathic proteins called hydrophobins (HPBs) with low sequence identity. Class I can self-assemble into an outermost layer of rodlet bundles on aerial cell surfaces, conferring cellular hydrophobicity that supports fungal growth, development and dispersal; whereas Class II form highly ordered films at water-air interfaces through intermolecular interactions but contribute nothing to the rodlet structure. The sequence is that of Quadr-hydrophobin from Cordyceps militaris (Caterpillar fungus).